The primary structure comprises 63 residues: Transmembrane protein ZNF593OS (63 aa).

Residues 30–50 (LAGVVATVLAVLGLGGSCYAV) traverse the membrane as a helical segment.

It is found in the membrane. This Homo sapiens (Human) protein is Transmembrane protein ZNF593OS.